An 884-amino-acid chain; its full sequence is Translation initiation factor IF-2 (884 aa).

2 stretches are compositionally biased toward basic and acidic residues: residues 110–153 and 193–234; these read AKAK…KEKA and KQKE…DHHV. The disordered stretch occupies residues 110-291; it reads AKAKAEADAK…NRSTAPQSMA (182 aa). The span at 255-268 shows a compositional bias: basic residues; the sequence is GRRARNKPTNKKRG. Positions 384-553 constitute a tr-type G domain; the sequence is TRAPVVTIMG…LLQSEVLELK (170 aa). The segment at 393 to 400 is G1; that stretch reads GHVDHGKT. GTP is bound at residue 393–400; the sequence is GHVDHGKT. Residues 418 to 422 are G2; sequence GITQH. Residues 439–442 are G3; the sequence is DTPG. GTP is bound by residues 439–443 and 493–496; these read DTPGH and NKMD. The segment at 493–496 is G4; sequence NKMD. The segment at 529–531 is G5; the sequence is SAK.

Belongs to the TRAFAC class translation factor GTPase superfamily. Classic translation factor GTPase family. IF-2 subfamily.

It is found in the cytoplasm. Functionally, one of the essential components for the initiation of protein synthesis. Protects formylmethionyl-tRNA from spontaneous hydrolysis and promotes its binding to the 30S ribosomal subunits. Also involved in the hydrolysis of GTP during the formation of the 70S ribosomal complex. The sequence is that of Translation initiation factor IF-2 from Shewanella denitrificans (strain OS217 / ATCC BAA-1090 / DSM 15013).